The following is a 69-amino-acid chain: Putative membrane protein insertion efficiency factor (69 aa).

This sequence belongs to the UPF0161 family.

It is found in the cell inner membrane. Could be involved in insertion of integral membrane proteins into the membrane. In Laribacter hongkongensis (strain HLHK9), this protein is Putative membrane protein insertion efficiency factor.